The sequence spans 328 residues: Aryl-hydrocarbon-interacting protein-like 1 (328 aa).

One can recognise a PPIase FKBP-type domain in the interval K53–Q145. 3 TPR repeats span residues V178 to L211, N230 to I263, and V264 to M297.

Directly interacts with NUB1.

It localises to the cytoplasm. The protein resides in the nucleus. Functionally, may be important in protein trafficking and/or protein folding and stabilization. This chain is Aryl-hydrocarbon-interacting protein-like 1 (AIPL1), found in Bos taurus (Bovine).